The following is a 187-amino-acid chain: Elongation factor P (187 aa).

This sequence belongs to the elongation factor P family.

It is found in the cytoplasm. Its pathway is protein biosynthesis; polypeptide chain elongation. Involved in peptide bond synthesis. Stimulates efficient translation and peptide-bond synthesis on native or reconstituted 70S ribosomes in vitro. Probably functions indirectly by altering the affinity of the ribosome for aminoacyl-tRNA, thus increasing their reactivity as acceptors for peptidyl transferase. The protein is Elongation factor P of Synechococcus sp. (strain WH7803).